A 332-amino-acid chain; its full sequence is Cysteine and histidine-rich domain-containing protein 1 (332 aa).

At Ala-2 the chain carries N-acetylalanine. Residues 2 to 77 (ALLCYNRGCG…KPPEPVKPEV (76 aa)) are interaction with PPP5C. 6 residues coordinate Zn(2+): Cys-5, Cys-10, Cys-24, His-27, Cys-42, and Cys-43. 2 CHORD domains span residues 5 to 64 (CYNR…KGRH) and 157 to 216 (CKNG…TGKH). At Thr-47 the chain carries Phosphothreonine. Residue Ser-51 is modified to Phosphoserine. The Zn(2+) site is built by Cys-59, His-64, Cys-157, Cys-162, Cys-176, His-179, Cys-194, Cys-195, Cys-211, and His-216. Residues 61–82 (KGRHNSEKPPEPVKPEVKTTEK) form a disordered region. The segment covering 64–82 (HNSEKPPEPVKPEVKTTEK) has biased composition (basic and acidic residues). Positions 65-316 (NSEKPPEPVK…AEPMQWASLE (252 aa)) are interaction with HSP90AA1 and HSP90AB1. A CS domain is found at 227-316 (VVPCRHDWHQ…AEPMQWASLE (90 aa)).

In terms of assembly, interacts with HSP90AA1, HSP90AB1, PPP5C, ROCK1 and ROCK2.

In terms of biological role, regulates centrosome duplication, probably by inhibiting the kinase activity of ROCK2. Proposed to act as co-chaperone for HSP90. May play a role in the regulation of NOD1 via a HSP90 chaperone complex. In vitro, has intrinsic chaperone activity. This function may be achieved by inhibiting association of ROCK2 with NPM1. Plays a role in ensuring the localization of the tyrosine kinase receptor EGFR to the plasma membrane, and thus ensures the subsequent regulation of EGFR activity and EGF-induced actin cytoskeleton remodeling. Involved in stress response. Prevents tumorigenesis. The chain is Cysteine and histidine-rich domain-containing protein 1 (CHORDC1) from Sus scrofa (Pig).